The sequence spans 338 residues: Malate dehydrogenase, mitochondrial (338 aa).

The transit peptide at 1–24 (MLSALARPAGAALRRSFSTSAQNN) directs the protein to the mitochondrion. NAD(+) contacts are provided by residues 31–37 (GASGGIG) and D57. The O-linked (GalNAc...) serine glycan is linked to S33. N6-acetyllysine; alternate occurs at positions 78 and 91. 2 positions are modified to N6-succinyllysine; alternate: K78 and K91. Positions 104 and 110 each coordinate substrate. Residues N117 and 140-142 (ISN) each bind NAD(+). N142 contacts substrate. Position 165 is an N6-acetyllysine (K165). D173 acts as the Proton relay in catalysis. R176 contributes to the substrate binding site. K185 carries the post-translational modification N6-acetyllysine; alternate. K185 is subject to N6-succinyllysine; alternate. H200 serves as the catalytic Proton acceptor. The residue at position 203 (K203) is an N6-succinyllysine. N6-acetyllysine; alternate is present on residues K215 and K239. N6-succinyllysine; alternate is present on residues K215 and K239. K239 carries the post-translational modification N6-malonyllysine; alternate. A Phosphoserine modification is found at S246. M251 contacts NAD(+). At K269 the chain carries N6-succinyllysine. N6-acetyllysine; alternate occurs at positions 296, 301, 307, 314, and 324. Residues K296, K301, K307, K314, and K324 each carry the N6-succinyllysine; alternate modification. K307 is subject to N6-malonyllysine; alternate. Phosphoserine is present on S326. N6-acetyllysine; alternate is present on residues K328, K329, and K335. N6-succinyllysine; alternate is present on K328. K329 carries the post-translational modification N6-malonyllysine; alternate. Position 335 is an N6-succinyllysine; alternate (K335).

This sequence belongs to the LDH/MDH superfamily. MDH type 1 family. In terms of assembly, homodimer. In terms of processing, acetylation is enhanced after treatment either with trichostin A (TSA) or with nicotinamide (NAM) with the appearance of tri- and tetraacetylations. Glucose also increases acetylation. In terms of tissue distribution, ubiquitously expressed. Highly expressed in skeletal muscle and heart. Also expressed in liver, ileum, colon, kidney and adipose tissue, and at very low levels in lung, pancreas, stomach and spleen.

The protein localises to the mitochondrion matrix. It catalyses the reaction (S)-malate + NAD(+) = oxaloacetate + NADH + H(+). Its activity is regulated as follows. Enzyme activity is enhanced by acetylation. The polypeptide is Malate dehydrogenase, mitochondrial (Felis catus (Cat)).